The primary structure comprises 390 residues: Methylthioribose-1-phosphate isomerase (390 aa).

The active-site Proton donor is the Asp-263.

It belongs to the eIF-2B alpha/beta/delta subunits family. MtnA subfamily.

The protein resides in the cytoplasm. It localises to the nucleus. The catalysed reaction is 5-(methylsulfanyl)-alpha-D-ribose 1-phosphate = 5-(methylsulfanyl)-D-ribulose 1-phosphate. The protein operates within amino-acid biosynthesis; L-methionine biosynthesis via salvage pathway; L-methionine from S-methyl-5-thio-alpha-D-ribose 1-phosphate: step 1/6. Catalyzes the interconversion of methylthioribose-1-phosphate (MTR-1-P) into methylthioribulose-1-phosphate (MTRu-1-P). The chain is Methylthioribose-1-phosphate isomerase from Meyerozyma guilliermondii (strain ATCC 6260 / CBS 566 / DSM 6381 / JCM 1539 / NBRC 10279 / NRRL Y-324) (Yeast).